Reading from the N-terminus, the 130-residue chain is Small ribosomal subunit protein uS11c (130 aa).

It belongs to the universal ribosomal protein uS11 family. Part of the 30S ribosomal subunit.

The protein localises to the plastid. This chain is Small ribosomal subunit protein uS11c, found in Aneura mirabilis (Parasitic liverwort).